A 162-amino-acid chain; its full sequence is Phosphopantetheine adenylyltransferase (162 aa).

Ser-11 contacts substrate. Residues 11-12 and His-19 each bind ATP; that span reads SF. Positions 43, 75, and 89 each coordinate substrate. Residues 90–92, Glu-100, and 125–131 each bind ATP; these read GLR and YSYLSSS.

This sequence belongs to the bacterial CoaD family. Homohexamer. It depends on Mg(2+) as a cofactor.

The protein resides in the cytoplasm. The enzyme catalyses (R)-4'-phosphopantetheine + ATP + H(+) = 3'-dephospho-CoA + diphosphate. It participates in cofactor biosynthesis; coenzyme A biosynthesis; CoA from (R)-pantothenate: step 4/5. Functionally, reversibly transfers an adenylyl group from ATP to 4'-phosphopantetheine, yielding dephospho-CoA (dPCoA) and pyrophosphate. The chain is Phosphopantetheine adenylyltransferase from Geotalea uraniireducens (strain Rf4) (Geobacter uraniireducens).